Consider the following 85-residue polypeptide: uncharacterized protein (85 aa).

The first 20 residues, 1–20, serve as a signal peptide directing secretion; that stretch reads MIKLFCVLAAFISINSACQS.

This is an uncharacterized protein from Invertebrate iridescent virus 6 (IIV-6).